The primary structure comprises 1200 residues: ATP-dependent helicase/deoxyribonuclease subunit B (1200 aa).

Belongs to the helicase family. AddB/RexB type 2 subfamily. As to quaternary structure, heterodimer of AddA and RexB. Requires Mg(2+) as cofactor.

In terms of biological role, the heterodimer acts as both an ATP-dependent DNA helicase and an ATP-dependent, dual-direction single-stranded exonuclease. Recognizes the chi site generating a DNA molecule suitable for the initiation of homologous recombination. This subunit has 5' -&gt; 3' nuclease activity but not helicase activity. The chain is ATP-dependent helicase/deoxyribonuclease subunit B from Lactiplantibacillus plantarum (strain ATCC BAA-793 / NCIMB 8826 / WCFS1) (Lactobacillus plantarum).